A 464-amino-acid chain; its full sequence is Opioid growth factor receptor-like protein 1 (464 aa).

Disordered regions lie at residues 1–91 (MGNL…AKPK) and 309–464 (ENFI…TSSG). Residues 43–59 (QQHDEPEQPKQPPERAG) are compositionally biased toward basic and acidic residues. Residues 74 to 86 (AAGAEQGGESTEG) show a composition bias toward low complexity. Positions 316–325 (PKKELPERSK) are enriched in basic and acidic residues. Polar residues predominate over residues 327-342 (QKTPTLPASGSNGQTS). Composition is skewed to basic and acidic residues over residues 363 to 382 (SVEE…DKPS), 390 to 400 (PKPRNTEKDSA), and 425 to 439 (SEKD…KDSE). Residues 452 to 464 (AQQNATNPQTSSG) are compositionally biased toward polar residues.

Belongs to the opioid growth factor receptor family.

The protein is Opioid growth factor receptor-like protein 1 (Ogfrl1) of Mus musculus (Mouse).